A 172-amino-acid chain; its full sequence is Ribosome maturation factor RimM (172 aa).

The 74-residue stretch at 97 to 170 (DDEYYYDEII…LITIDVLEGL (74 aa)) folds into the PRC barrel domain.

Belongs to the RimM family. In terms of assembly, binds ribosomal protein uS19.

The protein resides in the cytoplasm. Functionally, an accessory protein needed during the final step in the assembly of 30S ribosomal subunit, possibly for assembly of the head region. Essential for efficient processing of 16S rRNA. May be needed both before and after RbfA during the maturation of 16S rRNA. It has affinity for free ribosomal 30S subunits but not for 70S ribosomes. The polypeptide is Ribosome maturation factor RimM (Leuconostoc citreum (strain KM20)).